A 545-amino-acid chain; its full sequence is MYCEKLILLLGCFWISSSASDPADPLLVDLPNGKLRGRDNGNYYSYESLPYAEPPVGDLRFEAPQPYKQQWTDTFDATQPPVLCMQWDQFIQGDDKLAGNEDCLTVSVYRPKNSSRNSFPVVAQIHGVAFMFGGASQNGHENFMREGNLILVKISYRLGPLGFVSTGDADLSGNFGLKDQRLALLWIKQNIASFGGEPENILVIGHSAGGGSVHLQVLREDFSKVAKAAISFSGNALDPWVVQQGGRGRAFELGRIVGCGQASDSVTLKKCLKSKPASEIVSAVRNFLVFAYVPFTPFGPVVESPEAPEAFISQHPIDIIKSGKFAQVPWAVTYTTEDGGYNAALLLEKQASSGRELIVDLNDRWFDWAPYLLFYRDSMTTIKDMDDYSRKLRQEYLGDRRFSVESYWDLQRLFTDVLFKNSTEISLDLHRKHGKSPVYAFVYDNPANTGIGQGLAKRTDINFGTVHGDDYFLIFENIVREPQLRSDEEIISRNFLKMLNDFVLSENGTLAFGTCDFQDNVGSSKLQLLSITRNGCENLELESFP.

The signal sequence occupies residues 1 to 19; it reads MYCEKLILLLGCFWISSSA. Cys-84 and Cys-103 are disulfide-bonded. A glycan (N-linked (GlcNAc...) asparagine) is linked at Asn-113. The Acyl-ester intermediate role is filled by Ser-207. Cys-259 and Cys-271 are oxidised to a cystine. The N-linked (GlcNAc...) asparagine glycan is linked to Asn-421. His-467 functions as the Charge relay system in the catalytic mechanism. A glycan (N-linked (GlcNAc...) asparagine) is linked at Asn-507. Cys-515 and Cys-536 are disulfide-bonded.

Belongs to the type-B carboxylesterase/lipase family. Homodimer.

It is found in the secreted. The catalysed reaction is a carboxylic ester + H2O = an alcohol + a carboxylate + H(+). The polypeptide is Esterase-5B (Est-5B) (Drosophila miranda (Fruit fly)).